A 578-amino-acid polypeptide reads, in one-letter code: SUMOylated effector protein AmpA (578 aa).

Residues 144 to 169 are disordered; it reads PQTVDPSVVESATGSGVDTQEEQEID. Tandem repeats lie at residues 180-272, 304-425, and 428-557. Positions 180 to 557 are 3 X approximate tandem repeats; it reads TEEQEVILEE…VEADAGMQQE (378 aa). The tract at residues 516–578 is disordered; it reads VSVEADAGMQ…DPDDEDVLSY (63 aa).

In terms of processing, polysumoylated during infection on at least two lysine residues, in the N- and C-terminal section. SUMO2/3 modification of AmpA throughout the infection cycle is likely critical for bacterial intracellular survival, while terminal SUMO1 conjugation of AmpA may promote a late-stage infection cycle event. Only a small portion of the available AmpA pool is actually SUMOylated at any given time.

Its subcellular location is the secreted. It is found in the host membrane. It localises to the host cytoplasm. The protein localises to the host cytosol. In terms of biological role, secreted effector that hijacks host cell SUMOylation during A.phagocytophilum infection and is important for the pathogen's intracellular survival. This Anaplasma phagocytophilum (strain HZ) protein is SUMOylated effector protein AmpA.